The primary structure comprises 399 residues: ATP phosphoribosyltransferase regulatory subunit (399 aa).

The protein belongs to the class-II aminoacyl-tRNA synthetase family. HisZ subfamily. As to quaternary structure, heteromultimer composed of HisG and HisZ subunits.

The protein resides in the cytoplasm. Its pathway is amino-acid biosynthesis; L-histidine biosynthesis; L-histidine from 5-phospho-alpha-D-ribose 1-diphosphate: step 1/9. In terms of biological role, required for the first step of histidine biosynthesis. May allow the feedback regulation of ATP phosphoribosyltransferase activity by histidine. The protein is ATP phosphoribosyltransferase regulatory subunit of Symbiobacterium thermophilum (strain DSM 24528 / JCM 14929 / IAM 14863 / T).